A 352-amino-acid polypeptide reads, in one-letter code: Small ribosomal subunit biogenesis GTPase RsgA (352 aa).

Residues 1–11 (MTKRKLSKGQQ) are compositionally biased toward basic residues. Positions 1–35 (MTKRKLSKGQQRRVQENHKKRLQSKEKKNHVELDD) are disordered. Over residues 13-33 (RVQENHKKRLQSKEKKNHVEL) the composition is skewed to basic and acidic residues. A CP-type G domain is found at 114 to 276 (YYDGIKPIAA…VIDSPGVREF (163 aa)). GTP is bound by residues 162-165 (NKVD) and 216-224 (GQSGVGKSS). Residues Cys-300, Cys-305, His-307, and Cys-313 each contribute to the Zn(2+) site.

It belongs to the TRAFAC class YlqF/YawG GTPase family. RsgA subfamily. As to quaternary structure, monomer. Associates with 30S ribosomal subunit, binds 16S rRNA. Zn(2+) is required as a cofactor.

The protein resides in the cytoplasm. Its function is as follows. One of several proteins that assist in the late maturation steps of the functional core of the 30S ribosomal subunit. Helps release RbfA from mature subunits. May play a role in the assembly of ribosomal proteins into the subunit. Circularly permuted GTPase that catalyzes slow GTP hydrolysis, GTPase activity is stimulated by the 30S ribosomal subunit. The sequence is that of Small ribosomal subunit biogenesis GTPase RsgA from Proteus mirabilis (strain HI4320).